The chain runs to 156 residues: Large ribosomal subunit protein uL15 (156 aa).

Residues 26–46 (GIGCGKGKTSGRGHKGQKARS) form a disordered region. The span at 34–43 (TSGRGHKGQK) shows a compositional bias: basic residues.

It belongs to the universal ribosomal protein uL15 family. Part of the 50S ribosomal subunit.

Binds to the 23S rRNA. In Ehrlichia canis (strain Jake), this protein is Large ribosomal subunit protein uL15.